Reading from the N-terminus, the 567-residue chain is 2-succinyl-5-enolpyruvyl-6-hydroxy-3-cyclohexene-1-carboxylate synthase (567 aa).

The protein belongs to the TPP enzyme family. MenD subfamily. As to quaternary structure, homodimer. Requires Mg(2+) as cofactor. The cofactor is Mn(2+). Thiamine diphosphate serves as cofactor.

It catalyses the reaction isochorismate + 2-oxoglutarate + H(+) = 5-enolpyruvoyl-6-hydroxy-2-succinyl-cyclohex-3-ene-1-carboxylate + CO2. The protein operates within quinol/quinone metabolism; 1,4-dihydroxy-2-naphthoate biosynthesis; 1,4-dihydroxy-2-naphthoate from chorismate: step 2/7. Its pathway is quinol/quinone metabolism; menaquinone biosynthesis. Catalyzes the thiamine diphosphate-dependent decarboxylation of 2-oxoglutarate and the subsequent addition of the resulting succinic semialdehyde-thiamine pyrophosphate anion to isochorismate to yield 2-succinyl-5-enolpyruvyl-6-hydroxy-3-cyclohexene-1-carboxylate (SEPHCHC). This Yersinia pestis bv. Antiqua (strain Antiqua) protein is 2-succinyl-5-enolpyruvyl-6-hydroxy-3-cyclohexene-1-carboxylate synthase.